The sequence spans 260 residues: Thymidylate synthase (260 aa).

It functions in the pathway pyrimidine metabolism; dTTP biosynthesis. Functionally, is able to catalyze the biosynthesis of dTMP using dUMP, tetrahydrofolate and formaldehyde in vitro, i.e. a reaction equivalent to that catalyzed by bacterial thymidylate synthases (EC 2.1.1.45). However, M.jannaschii like most methanogenic Archaea lacks folates, thus the physiological cosubstrate is unknown but is likely one of the non-methylated methanopterin biosynthetic intermediates. The chain is Thymidylate synthase from Methanocaldococcus jannaschii (strain ATCC 43067 / DSM 2661 / JAL-1 / JCM 10045 / NBRC 100440) (Methanococcus jannaschii).